The primary structure comprises 618 residues: Proline--tRNA ligase (618 aa).

The protein belongs to the class-II aminoacyl-tRNA synthetase family. ProS type 1 subfamily. Homodimer.

Its subcellular location is the cytoplasm. The catalysed reaction is tRNA(Pro) + L-proline + ATP = L-prolyl-tRNA(Pro) + AMP + diphosphate. In terms of biological role, catalyzes the attachment of proline to tRNA(Pro) in a two-step reaction: proline is first activated by ATP to form Pro-AMP and then transferred to the acceptor end of tRNA(Pro). As ProRS can inadvertently accommodate and process non-cognate amino acids such as alanine and cysteine, to avoid such errors it has two additional distinct editing activities against alanine. One activity is designated as 'pretransfer' editing and involves the tRNA(Pro)-independent hydrolysis of activated Ala-AMP. The other activity is designated 'posttransfer' editing and involves deacylation of mischarged Ala-tRNA(Pro). The misacylated Cys-tRNA(Pro) is not edited by ProRS. The protein is Proline--tRNA ligase of Streptococcus pyogenes serotype M12 (strain MGAS2096).